The chain runs to 224 residues: Metalloproteinase inhibitor 4 (224 aa).

The N-terminal stretch at 1 to 29 is a signal peptide; it reads MPWSPLAALSWALVLRLLALLWPPGRGEA. Cysteine 30 contributes to the Zn(2+) binding site. 2 involved in metalloproteinase-binding regions span residues 30-33 and 99-100; these read CSCA and SS. 6 cysteine pairs are disulfide-bonded: cysteine 30–cysteine 102, cysteine 32–cysteine 131, cysteine 42–cysteine 156, cysteine 158–cysteine 205, cysteine 163–cysteine 168, and cysteine 176–cysteine 197. Positions 30 to 156 constitute an NTR domain; it reads CSCAPAHPQQ…SLNHHYHQNC (127 aa).

This sequence belongs to the protease inhibitor I35 (TIMP) family. As to expression, expressed in retina, smooth muscle, skin, pancreas, skeletal muscle, heart, brain, lung, kidney and testis. Not found in cartilage, spleen and liver.

It is found in the secreted. Complexes with metalloproteinases (such as collagenases) and irreversibly inactivates them by binding to their catalytic zinc cofactor. This is Metalloproteinase inhibitor 4 (Timp4) from Rattus norvegicus (Rat).